The sequence spans 219 residues: MSINKNKNLSSIKNKKNQDVNSRQELIKVYAPDIFDSKLIGKTLIKKRNPADENSSVDNKIYQVSLADILGKEEFSSINFNFKSLKIFNNECFTKFHGLTLTRDKICSLIKKWHTLIEVEVNFKTKDGYFLKLFLIAQSKKPKNMKSKTVYINSSQKRALRRRITDIIIKEGINMDIKDFIHRIYSLKIYEKIEINCSKIFPIHQVNIRKIKVVENSTL.

Belongs to the eukaryotic ribosomal protein eS1 family. Component of the small ribosomal subunit. Mature ribosomes consist of a small (40S) and a large (60S) subunit. The 40S subunit contains about 33 different proteins and 1 molecule of RNA (18S). The 60S subunit contains about 49 different proteins and 3 molecules of RNA (25S, 5.8S and 5S).

The protein resides in the cytoplasm. This Guillardia theta (Cryptophyte) protein is Small ribosomal subunit protein eS1.